We begin with the raw amino-acid sequence, 813 residues long: LPS-assembly protein LptD (813 aa).

A signal peptide spans 1–22 (MRRALRLLPLPLSIAICLPAMA).

This sequence belongs to the LptD family. As to quaternary structure, component of the lipopolysaccharide transport and assembly complex. Interacts with LptE and LptA.

The protein localises to the cell outer membrane. Functionally, together with LptE, is involved in the assembly of lipopolysaccharide (LPS) at the surface of the outer membrane. The chain is LPS-assembly protein LptD from Xanthomonas axonopodis pv. citri (strain 306).